Here is a 122-residue protein sequence, read N- to C-terminus: Large ribosomal subunit protein uL14 (122 aa).

It belongs to the universal ribosomal protein uL14 family. In terms of assembly, part of the 50S ribosomal subunit. Forms a cluster with proteins L3 and L19. In the 70S ribosome, L14 and L19 interact and together make contacts with the 16S rRNA in bridges B5 and B8.

In terms of biological role, binds to 23S rRNA. Forms part of two intersubunit bridges in the 70S ribosome. The chain is Large ribosomal subunit protein uL14 from Staphylococcus haemolyticus (strain JCSC1435).